A 243-amino-acid chain; its full sequence is Type III pantothenate kinase (243 aa).

6 to 13 (DIGNTVAK) contributes to the ATP binding site. Substrate contacts are provided by residues Tyr86 and 93-96 (GYDR). The Proton acceptor role is filled by Asp95. Asp116 is a K(+) binding site. Thr119 is a binding site for ATP. Position 171 (Thr171) interacts with substrate.

It belongs to the type III pantothenate kinase family. In terms of assembly, homodimer. NH4(+) serves as cofactor. It depends on K(+) as a cofactor.

It is found in the cytoplasm. The catalysed reaction is (R)-pantothenate + ATP = (R)-4'-phosphopantothenate + ADP + H(+). Its pathway is cofactor biosynthesis; coenzyme A biosynthesis; CoA from (R)-pantothenate: step 1/5. In terms of biological role, catalyzes the phosphorylation of pantothenate (Pan), the first step in CoA biosynthesis. The protein is Type III pantothenate kinase of Bacteroides fragilis (strain ATCC 25285 / DSM 2151 / CCUG 4856 / JCM 11019 / LMG 10263 / NCTC 9343 / Onslow / VPI 2553 / EN-2).